A 201-amino-acid chain; its full sequence is ADP-ribosylation factor-related protein 1 (201 aa).

Position 1 is an N-acetylmethionine (Met1). GTP contacts are provided by residues 24–31, 75–79, and 134–137; these read GLDNAGKT, DLGGQ, and NKQD.

It belongs to the small GTPase superfamily. Arf family. As to quaternary structure, interacts with SYS1.

It is found in the golgi apparatus. Its subcellular location is the trans-Golgi network. Trans-Golgi-associated GTPase that regulates protein sorting. Controls the targeting of ARL1 and its effector to the trans-Golgi. Required for the lipidation of chylomicrons in the intestine and required for VLDL lipidation in the liver. This is ADP-ribosylation factor-related protein 1 (ARFRP1) from Pongo abelii (Sumatran orangutan).